We begin with the raw amino-acid sequence, 123 residues long: Small ribosomal subunit protein uS12cz/uS12cy (123 aa).

The protein belongs to the universal ribosomal protein uS12 family. As to quaternary structure, part of the 30S ribosomal subunit.

The protein localises to the plastid. It is found in the chloroplast. Functionally, with S4 and S5 plays an important role in translational accuracy. Located at the interface of the 30S and 50S subunits. In Cucumis sativus (Cucumber), this protein is Small ribosomal subunit protein uS12cz/uS12cy (rps12-A).